The chain runs to 476 residues: Zinc transporter SLC39A7 (476 aa).

A helical membrane pass occupies residues 7 to 27; it reads APHWVAVGLLTWAALGLLVAG. The span at 35 to 109 shows a compositional bias: basic and acidic residues; sequence HKDVEEDFHG…SHGHSHDSLH (75 aa). Residues 35 to 131 form a disordered region; the sequence is HKDVEEDFHG…HGTSREAGAP (97 aa). Histidine 73 is modified (pros-methylhistidine). The span at 110–120 shows a compositional bias: basic residues; it reads HGGHGHAHREH. A run of 3 helical transmembrane segments spans residues 146–166, 177–197, and 222–242; these read ALGA…LIPV, LQIL…LHLI, and GPIL…LVVE. Residues 249–320 form a disordered region; that stretch reads KGGHGHSHGH…QSPEEEKAGS (72 aa). Positions 257 to 292 are enriched in basic and acidic residues; it reads GHGDRHAHGDSHTHGDRHECSSKEKPSTEEEKEVGG. Serine 283 is subject to Phosphoserine. A run of 2 helical transmembrane segments spans residues 393–413 and 417–437; these read VTAI…GGAV and VAGG…FIYV.

This sequence belongs to the ZIP transporter (TC 2.A.5) family. KE4/Catsup subfamily. In terms of assembly, homodimer. Post-translationally, methylation at some His residue by METTL9 leads to reduced zinc-binding. In terms of processing, rapidly phosphorylated by CK2 following Zn(2+) treatment. This phosphorylation is required for efficient cytosolic Zn(2+) release. In terms of tissue distribution, widely expressed. Highly expressed in the intestinal crypts.

The protein resides in the endoplasmic reticulum membrane. It localises to the golgi apparatus. It is found in the cis-Golgi network membrane. The enzyme catalyses Zn(2+)(in) = Zn(2+)(out). In terms of biological role, transports Zn(2+) from the endoplasmic reticulum (ER)/Golgi apparatus to the cytosol, playing an essential role in the regulation of cytosolic zinc levels. Acts as a gatekeeper of zinc release from intracellular stores, requiring post-translational activation by phosphorylation, resulting in activation of multiple downstream pathways leading to cell growth and proliferation. Has an essential role in B cell development and is required for proper B cell receptor signaling. Plays an important role in maintaining intestinal epithelial homeostasis and skin dermis development by regulating ER function. Controls cell signaling pathways involved in glucose metabolism in skeletal muscle. Has a protective role against ER stress in different biological contexts. Mediates Zn(2+)-induced ferroptosis. This chain is Zinc transporter SLC39A7 (Slc39a7), found in Mus musculus (Mouse).